Reading from the N-terminus, the 238-residue chain is DNA repair protein RecO (238 aa).

This sequence belongs to the RecO family.

Its function is as follows. Involved in DNA repair and RecF pathway recombination. In Flavobacterium psychrophilum (strain ATCC 49511 / DSM 21280 / CIP 103535 / JIP02/86), this protein is DNA repair protein RecO.